A 155-amino-acid chain; its full sequence is Ribosome maturation factor RimP (155 aa).

It belongs to the RimP family.

Its subcellular location is the cytoplasm. Its function is as follows. Required for maturation of 30S ribosomal subunits. In Macrococcus caseolyticus (strain JCSC5402) (Macrococcoides caseolyticum), this protein is Ribosome maturation factor RimP.